A 336-amino-acid chain; its full sequence is Torsin-1B (336 aa).

Positions 1-24 (MRRIGAFGGSTALWALLAAHVAGA) are cleaved as a signal peptide. N-linked (GlcNAc...) asparagine glycosylation occurs at Asn-64. Residue 109 to 116 (GWAGTGKN) coordinates ATP. Asn-165 is a glycosylation site (N-linked (GlcNAc...) asparagine).

The protein belongs to the ClpA/ClpB family. Torsin subfamily. As to quaternary structure, homohexamer. Interacts with TOR1A; the interaction may be specific of neural tissues. Interacts with TOR1AIP1; TOR1AIP1 is required for TOR1B location on the nuclear membrane. Interacts (ATP-bound) with TOR1AIP2; important for endoplasmic reticulum integrity. Post-translationally, N-glycosylated. As to expression, highly expressed in liver and muscle; lower expression levels are observed in brain (at protein level).

Its subcellular location is the endoplasmic reticulum lumen. It is found in the nucleus membrane. The enzyme catalyses ATP + H2O = ADP + phosphate + H(+). In terms of biological role, may serve as a molecular chaperone assisting in the proper folding of secreted and/or membrane proteins. Plays a role in non-neural cells nuclear envelope and endoplasmic reticulum integrity. May have a redundant function with TOR1A in non-neural tissues. The chain is Torsin-1B (Tor1b) from Mus musculus (Mouse).